We begin with the raw amino-acid sequence, 175 residues long: uncharacterized protein (175 aa).

Positions 1–33 are cleaved as a signal peptide; sequence MERLPYEIVSTIFRKAILHYVLIRGTTYPQSLA.

This is an uncharacterized protein from Methanocaldococcus jannaschii (strain ATCC 43067 / DSM 2661 / JAL-1 / JCM 10045 / NBRC 100440) (Methanococcus jannaschii).